The primary structure comprises 170 residues: Nucleoside-triphosphatase THEP1 (170 aa).

Residues 7–14 (GMPGVGKT) and 98–105 (IIIIDELG) each bind ATP.

Belongs to the THEP1 NTPase family.

It catalyses the reaction a ribonucleoside 5'-triphosphate + H2O = a ribonucleoside 5'-diphosphate + phosphate + H(+). Its function is as follows. Has nucleotide phosphatase activity towards ATP, GTP, CTP, TTP and UTP. May hydrolyze nucleoside diphosphates with lower efficiency. This chain is Nucleoside-triphosphatase THEP1, found in Methanocaldococcus jannaschii (strain ATCC 43067 / DSM 2661 / JAL-1 / JCM 10045 / NBRC 100440) (Methanococcus jannaschii).